The chain runs to 101 residues: Small ribosomal subunit protein uS14 (101 aa).

The protein belongs to the universal ribosomal protein uS14 family. In terms of assembly, part of the 30S ribosomal subunit. Contacts proteins S3 and S10.

Functionally, binds 16S rRNA, required for the assembly of 30S particles and may also be responsible for determining the conformation of the 16S rRNA at the A site. In Photobacterium profundum (strain SS9), this protein is Small ribosomal subunit protein uS14.